The sequence spans 432 residues: MTNVVVVGSQWGDEGKGKIVDWLSERADIVVRFQGGHNAGHTLVIDGVSYKLSLLPSGVVRPGKLAVIGNGVVIDPHALIAEIDKLGKQGVQITPDNLRIADNATLILSLHRELDGFREDAASNSGTKIGTTRRGIGPAYEDKVGRRAIRVMDLADLDTLPAKVDRLLTHHNALRRGLGEAEISHQAIMDELSSVAARVLPFMDTVWLLLDKERRKGARILFEGAQGTLLDIDHGTYPFVTSSNTVAGQAAAGSGMGPGALGYILGITKAYTTRVGEGPFPTELHDEVGQFLGERGHEFGTVTGRKRRCGWFDAALVRQSVAANGITGIALTKLDVLDGLDELKICVGYTLDGQEIDHLPASQAQQASVKPVYITLEGWKESTVGARSWADLPAQAIKYVRQVEELIGAPVALLSTSPERDDTILVTDPFED.

GTP is bound by residues 12-18 (GDEGKGK) and 40-42 (GHT). Asp-13 serves as the catalytic Proton acceptor. Mg(2+) is bound by residues Asp-13 and Gly-40. IMP-binding positions include 13 to 16 (DEGK), 38 to 41 (NAGH), Thr-132, Arg-146, Gln-226, Thr-241, and Arg-305. His-41 acts as the Proton donor in catalysis. 301-307 (TVTGRKR) contacts substrate. GTP contacts are provided by residues Arg-307, 333–335 (KLD), and 415–417 (STS).

Belongs to the adenylosuccinate synthetase family. In terms of assembly, homodimer. Requires Mg(2+) as cofactor.

Its subcellular location is the cytoplasm. It catalyses the reaction IMP + L-aspartate + GTP = N(6)-(1,2-dicarboxyethyl)-AMP + GDP + phosphate + 2 H(+). It functions in the pathway purine metabolism; AMP biosynthesis via de novo pathway; AMP from IMP: step 1/2. Its function is as follows. Plays an important role in the de novo pathway of purine nucleotide biosynthesis. Catalyzes the first committed step in the biosynthesis of AMP from IMP. This Sinorhizobium fredii (strain NBRC 101917 / NGR234) protein is Adenylosuccinate synthetase.